We begin with the raw amino-acid sequence, 555 residues long: DNA-directed primase/polymerase protein (555 aa).

Residues 1–22 are a coiled coil; sequence MKRKWEATLKQIEERASHYERK. Residues Arg76, 114 to 116, and 165 to 169 each bind substrate; these read DLE and KFSRH. Positions 114 and 116 each coordinate Mn(2+). Residues 210-230 are disordered; that stretch reads ETTGHEFTHFSETPSEQGTCF. Residues 219-230 are compositionally biased toward polar residues; sequence FSETPSEQGTCF. At Ser255 the chain carries Phosphoserine. Residues 288 to 291 and Lys297 each bind substrate; that span reads RNFR. Positions 418, 425, 445, and 450 each coordinate Zn(2+). The short motif at 418-451 is the Zinc knuckle motif element; the sequence is CENIGRAHRSNNIMILVDLKNEVWYQKCHDPVCK. The segment at 480–503 is disordered; that stretch reads TDTTADTETKSPHGPSSSVLSKGA. The segment at 480-555 is interaction with RPA1; the sequence is TDTTADTETK…DELLIEVLQE (76 aa). 2 short sequence motifs (RPA1-binding motif) span residues 509 to 523 and 543 to 551; these read WDNGIDDTYILEATE and EIPDELLIE.

It belongs to the eukaryotic-type primase small subunit family. In terms of assembly, interacts with RPA1; leading to recruitment to chromatin and stimulate DNA primase activity. Interacts with SSBP1. Interacts with POLDIP2; leading to enhance DNA polymerase activity. Mn(2+) serves as cofactor.

The protein localises to the nucleus. It is found in the mitochondrion matrix. It localises to the chromosome. The enzyme catalyses ssDNA + n NTP = ssDNA/pppN(pN)n-1 hybrid + (n-1) diphosphate.. It catalyses the reaction DNA(n) + a 2'-deoxyribonucleoside 5'-triphosphate = DNA(n+1) + diphosphate. Its function is as follows. DNA primase and DNA polymerase required to tolerate replication-stalling lesions by bypassing them. Required to facilitate mitochondrial and nuclear replication fork progression by initiating de novo DNA synthesis using dNTPs and acting as an error-prone DNA polymerase able to bypass certain DNA lesions. Shows a high capacity to tolerate DNA damage lesions such as 8oxoG and abasic sites in DNA. Provides different translesion synthesis alternatives when DNA replication is stalled: able to synthesize DNA primers downstream of lesions, such as ultraviolet (UV) lesions, R-loops and G-quadruplexes, to allow DNA replication to continue. Can also realign primers ahead of 'unreadable lesions' such as abasic sites and 6-4 photoproduct (6-4 pyrimidine-pyrimidinone), thereby skipping the lesion. Repriming avoids fork degradation while leading to accumulation of internal ssDNA gaps behind the forks. Also able to incorporate nucleotides opposite DNA lesions such as 8oxoG, like a regular translesion synthesis DNA polymerase. Also required for reinitiating stalled forks after UV damage during nuclear DNA replication. Required for mitochondrial DNA (mtDNA) synthesis and replication, by reinitiating synthesis after UV damage or in the presence of chain-terminating nucleotides. Prevents APOBEC family-mediated DNA mutagenesis by repriming downstream of abasic site to prohibit error-prone translesion synthesis. Has non-overlapping function with POLH. In addition to its role in DNA damage response, also required to maintain efficient nuclear and mitochondrial DNA replication in unperturbed cells. The sequence is that of DNA-directed primase/polymerase protein from Bos taurus (Bovine).